A 362-amino-acid polypeptide reads, in one-letter code: Phosphoserine aminotransferase (362 aa).

Arginine 42 contacts L-glutamate. Pyridoxal 5'-phosphate-binding positions include 76 to 77 (AR), tryptophan 102, threonine 154, aspartate 174, and glutamine 197. Position 198 is an N6-(pyridoxal phosphate)lysine (lysine 198). 239–240 (NT) is a pyridoxal 5'-phosphate binding site.

It belongs to the class-V pyridoxal-phosphate-dependent aminotransferase family. SerC subfamily. In terms of assembly, homodimer. Pyridoxal 5'-phosphate is required as a cofactor.

Its subcellular location is the cytoplasm. The catalysed reaction is O-phospho-L-serine + 2-oxoglutarate = 3-phosphooxypyruvate + L-glutamate. It catalyses the reaction 4-(phosphooxy)-L-threonine + 2-oxoglutarate = (R)-3-hydroxy-2-oxo-4-phosphooxybutanoate + L-glutamate. The protein operates within amino-acid biosynthesis; L-serine biosynthesis; L-serine from 3-phospho-D-glycerate: step 2/3. It participates in cofactor biosynthesis; pyridoxine 5'-phosphate biosynthesis; pyridoxine 5'-phosphate from D-erythrose 4-phosphate: step 3/5. Catalyzes the reversible conversion of 3-phosphohydroxypyruvate to phosphoserine and of 3-hydroxy-2-oxo-4-phosphonooxybutanoate to phosphohydroxythreonine. In Buchnera aphidicola subsp. Cinara cedri (strain Cc), this protein is Phosphoserine aminotransferase.